The chain runs to 486 residues: Uridine/cytidine kinase UKL1, chloroplastic (486 aa).

The transit peptide at 1 to 47 (MPEDSSSLDYAMEKASGPHFSGLRFDGLLSSSPPNSSVVSSLRSAVS) directs the protein to the chloroplast. Residues 31-54 (SSPPNSSVVSSLRSAVSSSSPSSS) show a composition bias toward low complexity. A disordered region spans residues 31–67 (SSPPNSSVVSSLRSAVSSSSPSSSDPEAPKQPFIIGV). Positions 59-264 (PKQPFIIGVS…ITQHIHTKLG (206 aa)) are uridine kinase. The tract at residues 274 to 486 (NVYVIQSTFQ…RYFGTDEEDQ (213 aa)) is uracil phosphoribosyltransferase. GTP-binding positions include K298, R307, and 341–344 (CKKL). 5-phospho-alpha-D-ribose 1-diphosphate is bound by residues R351 and R376. A GTP-binding site is contributed by R396. Residues D402, 407–410 (TGNS), and E473 each bind 5-phospho-alpha-D-ribose 1-diphosphate. 472–474 (GEF) lines the uracil pocket.

It in the N-terminal section; belongs to the uridine kinase family. The protein in the C-terminal section; belongs to the UPRTase family. In terms of tissue distribution, expressed in roots, leaves and stems.

Its subcellular location is the plastid. The protein localises to the chloroplast. It is found in the cytoplasm. It carries out the reaction cytidine + ATP = CMP + ADP + H(+). The catalysed reaction is uridine + ATP = UMP + ADP + H(+). The protein operates within pyrimidine metabolism; CTP biosynthesis via salvage pathway; CTP from cytidine: step 1/3. It functions in the pathway pyrimidine metabolism; UMP biosynthesis via salvage pathway; UMP from uridine: step 1/1. Involved in the pyrimidine salvage pathway. Phosphorylates uridine to uridine monophosphate (UMP). Phosphorylates cytidine to cytidine monophosphate (CMP). Does not possess uracil phosphoribosyltransferase (UPRTase) activity that catalyzes the conversion of uracil and 5-phospho-alpha-D-ribose 1-diphosphate (PRPP) to UMP and diphosphate. The chain is Uridine/cytidine kinase UKL1, chloroplastic from Arabidopsis thaliana (Mouse-ear cress).